A 128-amino-acid polypeptide reads, in one-letter code: Small ribosomal subunit protein uS11 (128 aa).

It belongs to the universal ribosomal protein uS11 family. Part of the 30S ribosomal subunit. Interacts with proteins S7 and S18. Binds to IF-3.

In terms of biological role, located on the platform of the 30S subunit, it bridges several disparate RNA helices of the 16S rRNA. Forms part of the Shine-Dalgarno cleft in the 70S ribosome. The chain is Small ribosomal subunit protein uS11 from Ligilactobacillus salivarius (strain UCC118) (Lactobacillus salivarius).